The sequence spans 214 residues: MRYLTIALSKGRLTDMSVEIFEKIGIDCTELKSSTRKLILSDEKNKIKFFLAKPADVPTYVEYGAADIGIVGKDTLLEEGRNLYEVLDLGFAACRMALAGPAELQGKIDELNIKRVGTKYPNITRNYFEKTRRESVEIIKLNGSVELAPLVGLSEVIVDLVESGRTLKENGLVVLDTIADISARMVVNRVSMKMENERIQKIIDGVRDELSVRG.

It belongs to the ATP phosphoribosyltransferase family. Short subfamily. As to quaternary structure, heteromultimer composed of HisG and HisZ subunits.

It is found in the cytoplasm. It catalyses the reaction 1-(5-phospho-beta-D-ribosyl)-ATP + diphosphate = 5-phospho-alpha-D-ribose 1-diphosphate + ATP. Its pathway is amino-acid biosynthesis; L-histidine biosynthesis; L-histidine from 5-phospho-alpha-D-ribose 1-diphosphate: step 1/9. Functionally, catalyzes the condensation of ATP and 5-phosphoribose 1-diphosphate to form N'-(5'-phosphoribosyl)-ATP (PR-ATP). Has a crucial role in the pathway because the rate of histidine biosynthesis seems to be controlled primarily by regulation of HisG enzymatic activity. The chain is ATP phosphoribosyltransferase from Ruminiclostridium cellulolyticum (strain ATCC 35319 / DSM 5812 / JCM 6584 / H10) (Clostridium cellulolyticum).